The chain runs to 786 residues: Calcium-independent phospholipase A2-gamma (786 aa).

Residue Asn4 is glycosylated (N-linked (GlcNAc...) asparagine). 3 disordered regions span residues 158–180 (KKYSDKSTEKSPVPEGRNHIIDK), 225–285 (KENS…SLPI), and 321–348 (SKSQAEEQEEPAKSEPAGSKDKTVEEKK). Over residues 225–245 (KENSHFQEKSELEGKKVEEGK) the composition is skewed to basic and acidic residues. 2 stretches are compositionally biased toward polar residues: residues 246 to 258 (SSSLDPGILTSQA) and 266 to 285 (SAGTMDKATSPSGTPESLPI). One can recognise a PNPLA domain in the interval 449-644 (LTIDGGGTRG…LLNNPSALAM (196 aa)). The short motif at 453 to 458 (GGGTRG) is the GXGXXG element. Residues 483–503 (ICGVSTGAILAFMLGLFHLPL) traverse the membrane as a helical segment. Residues 485–489 (GVSTG) carry the GXSXG motif. The Nucleophile role is filled by Ser487. Asp631 functions as the Proton acceptor in the catalytic mechanism. The DGA/G motif lies at 631–633 (DGG). An N6-succinyllysine modification is found at Lys740.

In terms of tissue distribution, expressed in kidney, heart and brain.

It localises to the endoplasmic reticulum membrane. It is found in the mitochondrion membrane. Its subcellular location is the peroxisome membrane. The enzyme catalyses a 1,2-diacyl-sn-glycero-3-phosphocholine + H2O = a 1-acyl-sn-glycero-3-phosphocholine + a fatty acid + H(+). It carries out the reaction a 1,2-diacyl-sn-glycero-3-phosphocholine + H2O = a 2-acyl-sn-glycero-3-phosphocholine + a fatty acid + H(+). The catalysed reaction is a 1,2-diacyl-sn-glycero-3-phosphoethanolamine + H2O = a 1-acyl-sn-glycero-3-phosphoethanolamine + a fatty acid + H(+). It catalyses the reaction a 1-O-(1Z-alkenyl)-2-acyl-sn-glycero-3-phosphocholine + H2O = a 1-O-(1Z-alkenyl)-sn-glycero-3-phosphocholine + a fatty acid + H(+). The enzyme catalyses a 1-acyl-sn-glycero-3-phosphocholine + H2O = sn-glycerol 3-phosphocholine + a fatty acid + H(+). It carries out the reaction 1-acyl-2-(9Z,12Z)-octadecadienoyl-sn-glycero-3-phosphocholine + H2O = a 1-acyl-sn-glycero-3-phosphocholine + (9Z,12Z)-octadecadienoate + H(+). The catalysed reaction is 1-acyl-2-(5Z,8Z,11Z,14Z-eicosatetraenoyl)-sn-glycero-3-phosphocholine + H2O = a 1-acyl-sn-glycero-3-phosphocholine + (5Z,8Z,11Z,14Z)-eicosatetraenoate + H(+). It catalyses the reaction 1-hexadecanoyl-2-(5Z,8Z,11Z,14Z-eicosatetraenoyl)-sn-glycero-3-phosphocholine + H2O = 1-hexadecanoyl-sn-glycero-3-phosphocholine + (5Z,8Z,11Z,14Z)-eicosatetraenoate + H(+). The enzyme catalyses 1-octadecanoyl-2-(9Z-octadecenoyl)-sn-glycero-3-phosphocholine + H2O = 1-octadecanoyl-sn-glycero-3-phosphocholine + (9Z)-octadecenoate + H(+). It carries out the reaction 1-hexadecanoyl-2-(9Z-octadecenoyl)-sn-glycero-3-phosphocholine + H2O = 1-hexadecanoyl-sn-glycero-3-phosphocholine + (9Z)-octadecenoate + H(+). The catalysed reaction is 1-hexadecanoyl-2-(9Z,12Z-octadecadienoyl)-sn-glycero-3-phosphocholine + H2O = (9Z,12Z)-octadecadienoate + 1-hexadecanoyl-sn-glycero-3-phosphocholine + H(+). It catalyses the reaction 1-acyl-2-(9Z,12Z)-octadecadienoyl-sn-glycero-3-phosphoethanolamine + H2O = a 1-acyl-sn-glycero-3-phosphoethanolamine + (9Z,12Z)-octadecadienoate + H(+). The enzyme catalyses 1-acyl-2-(5Z,8Z,11Z,14Z)-eicosatetraenoyl-sn-glycero-3-phosphoethanolamine + H2O = a 1-acyl-sn-glycero-3-phosphoethanolamine + (5Z,8Z,11Z,14Z)-eicosatetraenoate + H(+). It carries out the reaction 1-hexadecanoyl-2-(5Z,8Z,11Z,14Z-eicosatetraenoyl)-sn-glycero-3-phosphoethanolamine + H2O = 1-hexadecanoyl-sn-glycero-3-phosphoethanolamine + (5Z,8Z,11Z,14Z)-eicosatetraenoate + H(+). The catalysed reaction is 1-hexadecanoyl-2-(5Z,8Z,11Z,14Z-eicosatetraenoyl)-sn-glycero-3-phosphocholine + H2O = 2-(5Z,8Z,11Z,14Z)-eicosatetraenoyl-sn-glycero-3-phosphocholine + hexadecanoate + H(+). It catalyses the reaction 1-octadecanoyl-2-(9Z-octadecenoyl)-sn-glycero-3-phosphocholine + H2O = 2-(9Z-octadecenoyl)-sn-glycero-3-phosphocholine + octadecanoate + H(+). The enzyme catalyses 1-hexadecanoyl-2-(4Z,7Z,10Z,13Z,16Z,19Z-docosahexaenoyl)-sn-glycero-3-phosphocholine + H2O = 2-(4Z,7Z,10Z,13Z,16Z,19Z-docosahexaenoyl)-sn-glycero-3-phosphocholine + hexadecanoate + H(+). It carries out the reaction 1-O-(1Z)-hexadecenyl-2 (5Z,8Z,11Z,14Z)-eicosatetraenoyl-sn-glycero-3-phosphocholine + H2O = 1-(1Z-hexadecenyl)-sn-glycero-3-phosphocholine + (5Z,8Z,11Z,14Z)-eicosatetraenoate + H(+). The catalysed reaction is 1-O-(1Z-hexadecenyl)-2-(9Z-octadecenoyl)-sn-glycero-3-phosphocholine + H2O = 1-(1Z-hexadecenyl)-sn-glycero-3-phosphocholine + (9Z)-octadecenoate + H(+). It catalyses the reaction 1-hexadecanoyl-sn-glycero-3-phosphocholine + H2O = sn-glycerol 3-phosphocholine + hexadecanoate + H(+). The enzyme catalyses 1',3'-bis-[1,2-di-(9Z,12Z-octadecadienoyl)-sn-glycero-3-phospho]-glycerol + H2O = 1'-[1,2-di-(9Z,12Z-octadecadienoyl)-sn-glycero-3-phospho]-3'-[1-(9Z,12Z-octadecadienoyl)-sn-glycero-3-phospho]-glycerol + (9Z,12Z)-octadecadienoate + H(+). It carries out the reaction 1'-[1-acyl-2-(9-hydroxy-(10E,12Z)-octadecadienoyl)-sn-glycero-3-phospho]-3'-[1,2-diacyl-sn-glycero-3-phospho]-glycerol + H2O = 9-hydroxy-(10E,12Z)-octadecadienoate + 1'-[1,2-diacyl-sn-glycero-3-phospho],3'-[1-acyl-sn-glycero-3-phospho]-glycerol + H(+). Its pathway is phospholipid metabolism. With respect to regulation, calcium-independent phospholipase. In terms of biological role, calcium-independent and membrane-bound phospholipase, that catalyzes the esterolytic cleavage of fatty acids from glycerophospholipids to yield free fatty acids and lysophospholipids, hence regulating membrane physical properties and the release of lipid second messengers and growth factors. Hydrolyzes phosphatidylethanolamine, phosphatidylcholine and probably phosphatidylinositol with a possible preference for the former. Has also a broad substrate specificity in terms of fatty acid moieties, hydrolyzing saturated and mono-unsaturated fatty acids at nearly equal rates from either the sn-1 or sn-2 position in diacyl phosphatidylcholine. However, has a weak activity toward polyunsaturated fatty acids at the sn-2 position, and thereby favors the production of 2-arachidonoyl lysophosphatidylcholine, a key branch point metabolite in eicosanoid signaling. On the other hand, can produce arachidonic acid from the sn-1 position of diacyl phospholipid and from the sn-2 position of arachidonate-containing plasmalogen substrates. Therefore, plays an important role in the mobilization of arachidonic acid in response to cellular stimuli and the generation of lipid second messengers. Can also hydrolyze lysophosphatidylcholine. In the mitochondrial compartment, catalyzes the hydrolysis and release of oxidized aliphatic chains from cardiolipin and integrates mitochondrial bioenergetics and signaling. It is essential for maintaining efficient bioenergetic mitochondrial function through tailoring mitochondrial membrane lipid metabolism and composition. This chain is Calcium-independent phospholipase A2-gamma, found in Oryctolagus cuniculus (Rabbit).